Consider the following 349-residue polypeptide: N-formyl peptide receptor 3 (349 aa).

Over 1-27 the chain is Extracellular; that stretch reads METNFSIPLNESEEVLPEPAGHTVLWI. Asparagine 4 and asparagine 10 each carry an N-linked (GlcNAc...) asparagine glycan. Residues 28-50 form a helical membrane-spanning segment; that stretch reads FSLLVHGVTFIFGVLGNGLVIWV. Topologically, residues 51-61 are cytoplasmic; the sequence is AGFRMTRTVNT. A helical membrane pass occupies residues 62–83; it reads ICYLNLALADFSFSAILPFRMV. Over 84–100 the chain is Extracellular; it reads SVAMREKWPFGTFLCKL. The cysteines at positions 98 and 176 are disulfide-linked. The chain crosses the membrane as a helical span at residues 101 to 121; sequence VHVMIDINLFVSVYLITIIAL. Over 122 to 140 the chain is Cytoplasmic; the sequence is DRCICVLHPAWAQNHRTMS. Residues 141 to 162 traverse the membrane as a helical segment; sequence LAKRVMMGLWILAIVLTLPNFI. Topologically, residues 163 to 205 are extracellular; the sequence is FWTTISTKNGDTYCIFNFPFWGDTAVERLNAFITMGKVFLILH. Residues 206 to 226 form a helical membrane-spanning segment; sequence FIIGFSMPMSIITVCYGIIAA. Over 227–242 the chain is Cytoplasmic; the sequence is KIHRNHMIKSSSPLRV. The chain crosses the membrane as a helical span at residues 243–266; it reads FAAVVASFFICWFPYELIGILMAV. Residues 267–286 are Extracellular-facing; that stretch reads WLKEMLLNGKYKIILVLLNP. Residues 287–306 traverse the membrane as a helical segment; sequence TSSLAFFNSCLNPILYVFLG. Residues 307–349 lie on the Cytoplasmic side of the membrane; the sequence is SNFQERLIRSLPTSLERALTEVPDSAQTSNTHTNSASPPEETE. A disordered region spans residues 328-349; sequence VPDSAQTSNTHTNSASPPEETE. The segment covering 331–343 has biased composition (polar residues); it reads SAQTSNTHTNSAS.

This sequence belongs to the G-protein coupled receptor 1 family.

Its subcellular location is the cell membrane. In terms of biological role, low affinity receptor for N-formyl-methionyl peptides, which are powerful neutrophils chemotactic factors. Binding of FMLP to the receptor causes activation of neutrophils. This response is mediated via a G-protein that activates a phosphatidylinositol-calcium second messenger system. The chain is N-formyl peptide receptor 3 (FPR3) from Pongo pygmaeus (Bornean orangutan).